Here is a 101-residue protein sequence, read N- to C-terminus: Phosphoribosyl-ATP pyrophosphatase (101 aa).

The protein belongs to the PRA-PH family.

The protein localises to the cytoplasm. It catalyses the reaction 1-(5-phospho-beta-D-ribosyl)-ATP + H2O = 1-(5-phospho-beta-D-ribosyl)-5'-AMP + diphosphate + H(+). It participates in amino-acid biosynthesis; L-histidine biosynthesis; L-histidine from 5-phospho-alpha-D-ribose 1-diphosphate: step 2/9. In Natronomonas pharaonis (strain ATCC 35678 / DSM 2160 / CIP 103997 / JCM 8858 / NBRC 14720 / NCIMB 2260 / Gabara) (Halobacterium pharaonis), this protein is Phosphoribosyl-ATP pyrophosphatase.